The chain runs to 465 residues: tRNA-2-methylthio-N(6)-dimethylallyladenosine synthase (465 aa).

In terms of domain architecture, MTTase N-terminal spans 5 to 125 (RKLHIKSFGC…LPELLEKARR (121 aa)). The [4Fe-4S] cluster site is built by cysteine 14, cysteine 50, cysteine 88, cysteine 166, cysteine 170, and cysteine 173. The region spanning 152 to 382 (RARGVSAFVT…QLQGLIDSQQ (231 aa)) is the Radical SAM core domain. In terms of domain architecture, TRAM spans 387 to 449 (RASIGTTVDV…RYSLIGELVK (63 aa)).

It belongs to the methylthiotransferase family. MiaB subfamily. Monomer. It depends on [4Fe-4S] cluster as a cofactor.

The protein resides in the cytoplasm. The catalysed reaction is N(6)-dimethylallyladenosine(37) in tRNA + (sulfur carrier)-SH + AH2 + 2 S-adenosyl-L-methionine = 2-methylsulfanyl-N(6)-dimethylallyladenosine(37) in tRNA + (sulfur carrier)-H + 5'-deoxyadenosine + L-methionine + A + S-adenosyl-L-homocysteine + 2 H(+). Catalyzes the methylthiolation of N6-(dimethylallyl)adenosine (i(6)A), leading to the formation of 2-methylthio-N6-(dimethylallyl)adenosine (ms(2)i(6)A) at position 37 in tRNAs that read codons beginning with uridine. The polypeptide is tRNA-2-methylthio-N(6)-dimethylallyladenosine synthase (Rhodopseudomonas palustris (strain BisA53)).